A 93-amino-acid polypeptide reads, in one-letter code: Integration host factor subunit beta (93 aa).

This sequence belongs to the bacterial histone-like protein family. Heterodimer of an alpha and a beta chain.

In terms of biological role, this protein is one of the two subunits of integration host factor, a specific DNA-binding protein that functions in genetic recombination as well as in transcriptional and translational control. The sequence is that of Integration host factor subunit beta from Actinobacillus pleuropneumoniae serotype 7 (strain AP76).